Consider the following 340-residue polypeptide: DNA-directed RNA polymerase subunit alpha (340 aa).

The tract at residues 1 to 226 (MLIAQRPSLT…ELFGLARELN (226 aa)) is alpha N-terminal domain (alpha-NTD). Residues 243-340 (LAADLALPIE…DAGFVETEQY (98 aa)) are alpha C-terminal domain (alpha-CTD).

The protein belongs to the RNA polymerase alpha chain family. In terms of assembly, homodimer. The RNAP catalytic core consists of 2 alpha, 1 beta, 1 beta' and 1 omega subunit. When a sigma factor is associated with the core the holoenzyme is formed, which can initiate transcription. Post-translationally, the last 19 amino acids in the C-terminal part are cleaved in the spore.

The enzyme catalyses RNA(n) + a ribonucleoside 5'-triphosphate = RNA(n+1) + diphosphate. Its function is as follows. DNA-dependent RNA polymerase catalyzes the transcription of DNA into RNA using the four ribonucleoside triphosphates as substrates. The sequence is that of DNA-directed RNA polymerase subunit alpha from Streptomyces granaticolor.